Reading from the N-terminus, the 199-residue chain is MISPENITGLILAGGRAQRMGGIDKGLISFHQKPLIESAINRLKNQVGPILINANRNITKYAGYGYPVVMDETPDFSGPLAGFSVGLKACKTSYLLTSPCDSPLLPLDLAARLAAEMERGPFDLVYASSLESGKTWAQPVFCLMRANLQDSLTAFLTKGDLKIDRWFKELKSSTVIFDDAQAFANVNTPEELKILEAAL.

GTP is bound by residues 12 to 14, Lys25, Asn53, Asp71, and Asp101; that span reads LAG. Mg(2+) is bound at residue Asp101.

It belongs to the MobA family. Monomer. Mg(2+) serves as cofactor.

The protein localises to the cytoplasm. The enzyme catalyses Mo-molybdopterin + GTP + H(+) = Mo-molybdopterin guanine dinucleotide + diphosphate. Transfers a GMP moiety from GTP to Mo-molybdopterin (Mo-MPT) cofactor (Moco or molybdenum cofactor) to form Mo-molybdopterin guanine dinucleotide (Mo-MGD) cofactor. This Polynucleobacter asymbioticus (strain DSM 18221 / CIP 109841 / QLW-P1DMWA-1) (Polynucleobacter necessarius subsp. asymbioticus) protein is Molybdenum cofactor guanylyltransferase.